A 125-amino-acid chain; its full sequence is MSKEEILQAIKNMTVLELAELVKALEEEFGVSAAAPVAVAAAPAAGAPAAAPAEEKTEFDVILQEVGSDKIKVIKVVREITGLGLKEAKDLVDSVPKPIKEGVSKEEANQIKAKFEEVGAKVEIK.

The protein belongs to the bacterial ribosomal protein bL12 family. In terms of assembly, homodimer. Part of the ribosomal stalk of the 50S ribosomal subunit. Forms a multimeric L10(L12)X complex, where L10 forms an elongated spine to which 2 to 4 L12 dimers bind in a sequential fashion. Binds GTP-bound translation factors.

Its function is as follows. Forms part of the ribosomal stalk which helps the ribosome interact with GTP-bound translation factors. Is thus essential for accurate translation. This is Large ribosomal subunit protein bL12 from Caldanaerobacter subterraneus subsp. tengcongensis (strain DSM 15242 / JCM 11007 / NBRC 100824 / MB4) (Thermoanaerobacter tengcongensis).